We begin with the raw amino-acid sequence, 708 residues long: ABC transporter G family member 18 (708 aa).

Positions 75–317 (RRRFDFSRRK…FSSFGRPIPE (243 aa)) constitute an ABC transporter domain. 109–116 (GGSGAGKS) serves as a coordination point for ATP. Positions 402-612 (AETFILAKRY…PYEAVLINEF (211 aa)) constitute an ABC transmembrane type-2 domain. 7 helical membrane passes run 421–441 (LIGM…TVYW), 456–476 (FFAF…PVFI), 508–528 (LLAL…LSGG), 537–557 (LIIY…SGLI), 560–580 (VMMS…LGGF), 589–609 (LYWI…AVLI), and 681–701 (LWIT…SLLF).

It belongs to the ABC transporter superfamily. ABCG family. Eye pigment precursor importer (TC 3.A.1.204) subfamily.

The protein localises to the membrane. This Arabidopsis thaliana (Mouse-ear cress) protein is ABC transporter G family member 18 (ABCG18).